Here is a 560-residue protein sequence, read N- to C-terminus: 2-succinyl-5-enolpyruvyl-6-hydroxy-3-cyclohexene-1-carboxylate synthase (560 aa).

This sequence belongs to the TPP enzyme family. MenD subfamily. As to quaternary structure, homodimer. Requires Mg(2+) as cofactor. Mn(2+) is required as a cofactor. The cofactor is thiamine diphosphate.

The catalysed reaction is isochorismate + 2-oxoglutarate + H(+) = 5-enolpyruvoyl-6-hydroxy-2-succinyl-cyclohex-3-ene-1-carboxylate + CO2. It functions in the pathway quinol/quinone metabolism; 1,4-dihydroxy-2-naphthoate biosynthesis; 1,4-dihydroxy-2-naphthoate from chorismate: step 2/7. It participates in quinol/quinone metabolism; menaquinone biosynthesis. Functionally, catalyzes the thiamine diphosphate-dependent decarboxylation of 2-oxoglutarate and the subsequent addition of the resulting succinic semialdehyde-thiamine pyrophosphate anion to isochorismate to yield 2-succinyl-5-enolpyruvyl-6-hydroxy-3-cyclohexene-1-carboxylate (SEPHCHC). The chain is 2-succinyl-5-enolpyruvyl-6-hydroxy-3-cyclohexene-1-carboxylate synthase from Pectobacterium carotovorum subsp. carotovorum (strain PC1).